Reading from the N-terminus, the 597-residue chain is Sodium/mannose cotransporter SLC5A10 (597 aa).

Residues 1-16 (MVADNSTSDPHAPGPQ) are Extracellular-facing. N5 carries an N-linked (GlcNAc...) asparagine glycan. The chain crosses the membrane as a helical span at residues 17–37 (LSVTDIVVITVYFALNVAVGI). The Cytoplasmic segment spans residues 38-73 (WSSCRASRNTVSGYFLAGRDMTWWPIGASLFGSSEG). S49 bears the Phosphoserine mark. The helical transmembrane segment at 74–94 (SGLFIGLAGSGAAGGLAVAGF) threads the bilayer. Residues 95 to 100 (DWNATY) lie on the Extracellular side of the membrane. Residues 101 to 121 (VLLALAWVFGAIYISSEIVTL) traverse the membrane as a helical segment. The Cytoplasmic portion of the chain corresponds to 122–137 (AEYIQKRFGGQRIRMY). Residues 138–158 (LSVLSLLLSVFTKISLDLYAG) form a helical membrane-spanning segment. Residues 159–171 (ALFVHICLGWNFY) are Extracellular-facing. Residues 172-194 (LSTILTLTITALYTITGGLVAVI) traverse the membrane as a helical segment. At 195–200 (YTDALQ) the chain is on the cytoplasmic side. Residues 201–219 (TLIMVVGAVILAIKAFHQI) form a helical membrane-spanning segment. Residues 220–265 (DGYGQMEAAYARAIPSRTVANTTCHLPRADAMHMFRDPYTGDLPWT) lie on the Extracellular side of the membrane. Residues 266–286 (GMTFGLTIMATWYWCTDQVIV) traverse the membrane as a helical segment. Residues 287–301 (QRSLSARNLNHAKAG) lie on the Cytoplasmic side of the membrane. Residues 302–322 (SILASYLKMLPMGLMIMPGMI) form a helical membrane-spanning segment. Residues 323-367 (SRALFPDEVGCVVPSECLRACGAEIGCSNIAYPKLVMELMPVGLR) lie on the Extracellular side of the membrane. Residues 368–390 (GLMIAVMMPALMSSLSSIFNSSS) form a helical membrane-spanning segment. Residues 391 to 410 (TLFTMDIWRRLRPCASEREL) are Cytoplasmic-facing. The chain crosses the membrane as a helical span at residues 411–431 (LLVGRLVIVVLIGVSVAWIPV). Residues 432-444 (LQGSNGGQLFIYM) are Extracellular-facing. Residues 445–465 (QSVTSSLAPPVTAVFTLGIFW) traverse the membrane as a helical segment. The Cytoplasmic segment spans residues 466 to 472 (QRANEQG). A helical transmembrane segment spans residues 473 to 493 (AFWGLLAGLAVGATRLVLEFL). Residues 494–514 (HPAPPCGAADTRPAVLSQLHY) are Extracellular-facing. The chain crosses the membrane as a helical span at residues 515–535 (LHFAVALFVLTGAVAVGGSLL). At 536–576 (TPPPRRHQIENLTWWTLTRDLSLGAKAGDGQTPQRYTFWAR) the chain is on the cytoplasmic side. A helical transmembrane segment spans residues 577-597 (VCGFNAILLMCVNIFFYAYFA).

It belongs to the sodium:solute symporter (SSF) (TC 2.A.21) family. In terms of tissue distribution, expressed only in kidney.

The protein resides in the apical cell membrane. The catalysed reaction is D-mannose(out) + Na(+)(out) = D-mannose(in) + Na(+)(in). The enzyme catalyses D-fructopyranose(out) + Na(+)(out) = D-fructopyranose(in) + Na(+)(in). In terms of biological role, electrogenic Na+-coupled sugar symporter that actively transports D-mannose or D-fructose at the plasma membrane, with a Na+ to sugar coupling ratio of 1:1. Transporter activity is driven by a transmembrane Na+ electrochemical gradient set by the Na+/K+ pump. Exclusively recognizes sugar substrates having a pyranose ring with an axial hydroxyl group on carbon 2. Has likely evolved to enable renal reabsorption of D-mannose, an important constituent of oligosaccharide chains of glycoproteins. Contributes to dietary D-fructose reabsorption from glomerular filtrate across the brush border of the kidney. In Oryctolagus cuniculus (Rabbit), this protein is Sodium/mannose cotransporter SLC5A10 (SLC5A10).